Here is a 192-residue protein sequence, read N- to C-terminus: Holliday junction branch migration complex subunit RuvA (192 aa).

The segment at 1–61 (MFEYLKGIVA…DTGITLYGFL (61 aa)) is domain I. The domain II stretch occupies residues 62-137 (SLEDKELFLK…KLGDYVKKSA (76 aa)). Positions 137-140 (AVAT) are flexible linker. The domain III stretch occupies residues 141-192 (DLTPSLQDALLALVALGYTQKEVDRITPKLAKLPENTADGYIKEALALLLKK).

It belongs to the RuvA family. Homotetramer. Forms an RuvA(8)-RuvB(12)-Holliday junction (HJ) complex. HJ DNA is sandwiched between 2 RuvA tetramers; dsDNA enters through RuvA and exits via RuvB. An RuvB hexamer assembles on each DNA strand where it exits the tetramer. Each RuvB hexamer is contacted by two RuvA subunits (via domain III) on 2 adjacent RuvB subunits; this complex drives branch migration. In the full resolvosome a probable DNA-RuvA(4)-RuvB(12)-RuvC(2) complex forms which resolves the HJ.

The protein localises to the cytoplasm. Its function is as follows. The RuvA-RuvB-RuvC complex processes Holliday junction (HJ) DNA during genetic recombination and DNA repair, while the RuvA-RuvB complex plays an important role in the rescue of blocked DNA replication forks via replication fork reversal (RFR). RuvA specifically binds to HJ cruciform DNA, conferring on it an open structure. The RuvB hexamer acts as an ATP-dependent pump, pulling dsDNA into and through the RuvAB complex. HJ branch migration allows RuvC to scan DNA until it finds its consensus sequence, where it cleaves and resolves the cruciform DNA. This chain is Holliday junction branch migration complex subunit RuvA, found in Lactobacillus gasseri (strain ATCC 33323 / DSM 20243 / BCRC 14619 / CIP 102991 / JCM 1131 / KCTC 3163 / NCIMB 11718 / NCTC 13722 / AM63).